The sequence spans 112 residues: Notch-regulated ankyrin repeat-containing protein A (112 aa).

ANK repeat units lie at residues 48–77 (EGQT…DIRL) and 81–110 (EGWS…YSSG).

This sequence belongs to the NRARP family.

Regulates independently canonical Wnt and Notch signaling by modulating LEF1 and Notch protein turnover. Stabilizes LEF1, a pivotal transcription factor in the Wnt signaling cascade, by blocking its ubiquitination. Involved in angiogenesis; involved in intersegmental vessel patterning during development. The chain is Notch-regulated ankyrin repeat-containing protein A (nrarpa) from Danio rerio (Zebrafish).